A 144-amino-acid chain; its full sequence is Endoribonuclease YbeY (144 aa).

Zn(2+) contacts are provided by histidine 105, histidine 109, and aspartate 115.

Belongs to the endoribonuclease YbeY family. Requires Zn(2+) as cofactor.

It is found in the cytoplasm. Single strand-specific metallo-endoribonuclease involved in late-stage 70S ribosome quality control and in maturation of the 3' terminus of the 16S rRNA. This is Endoribonuclease YbeY from Chlorobium limicola (strain DSM 245 / NBRC 103803 / 6330).